A 366-amino-acid chain; its full sequence is Acetylserotonin O-methyltransferase 2 (366 aa).

The S-adenosyl-L-homocysteine site is built by Gly209, Asp232, Asp253, and Lys267. The Proton acceptor role is filled by His271. Active-site residues include Glu302 and Glu332.

This sequence belongs to the class I-like SAM-binding methyltransferase superfamily. Cation-independent O-methyltransferase family. As to quaternary structure, homodimer. As to expression, expressed in roots, leaves, stems and flowers.

Its subcellular location is the cytoplasm. It carries out the reaction N-acetylserotonin + S-adenosyl-L-methionine = melatonin + S-adenosyl-L-homocysteine + H(+). It functions in the pathway aromatic compound metabolism; melatonin biosynthesis; melatonin from serotonin: step 1/2. Functionally, methyltransferase which catalyzes the transfer of a methyl group onto N-acetylserotonin, producing melatonin (N-acetyl-5-methoxytryptamine). The protein is Acetylserotonin O-methyltransferase 2 of Oryza sativa subsp. japonica (Rice).